Here is a 200-residue protein sequence, read N- to C-terminus: 3-isopropylmalate dehydratase small subunit (200 aa).

The protein belongs to the LeuD family. LeuD type 1 subfamily. In terms of assembly, heterodimer of LeuC and LeuD.

It carries out the reaction (2R,3S)-3-isopropylmalate = (2S)-2-isopropylmalate. It functions in the pathway amino-acid biosynthesis; L-leucine biosynthesis; L-leucine from 3-methyl-2-oxobutanoate: step 2/4. Its function is as follows. Catalyzes the isomerization between 2-isopropylmalate and 3-isopropylmalate, via the formation of 2-isopropylmaleate. In Sodalis glossinidius (strain morsitans), this protein is 3-isopropylmalate dehydratase small subunit.